A 479-amino-acid polypeptide reads, in one-letter code: Ankyrin repeat, SAM and basic leucine zipper domain-containing protein 1 (479 aa).

A phosphoserine mark is found at Ser22 and Ser24. 6 ANK repeats span residues 49–78, 82–111, 114–148, 152–181, 185–214, and 218–247; these read EKNETFKKALTTGDILLVKELLNSGISVDS, YGWTPLMYAASVSNVELVRVLLDRGANASF, DKQTILITACSARGSEEQILKCVELLLSRNADPNV, RLMTPIMYAARDGHTQVVALLVAHGAEVNT, NGYTALTWAARQGHKNVVLKLLELGANKML, and DGKTPSEIAKRNKHVEIFSFLSLTLNPLEG. The 63-residue stretch at 276–338 folds into the SAM domain; sequence SYTALGDLEI…KILDALKELQ (63 aa).

Interacts with DDX4, PIWIL1, RANBP9 and TDRD1.

It is found in the cytoplasm. Its function is as follows. Plays a central role during spermatogenesis by repressing transposable elements and preventing their mobilization, which is essential for the germline integrity. Acts via the piRNA metabolic process, which mediates the repression of transposable elements during meiosis by forming complexes composed of piRNAs and Piwi proteins and governs the methylation and subsequent repression of transposons. Its association with pi-bodies suggests a participation in the primary piRNAs metabolic process. Required prior to the pachytene stage to facilitate the production of multiple types of piRNAs, including those associated with repeats involved in the regulation of retrotransposons. May act by mediating protein-protein interactions during germ cell maturation. In Rhinolophus ferrumequinum (Greater horseshoe bat), this protein is Ankyrin repeat, SAM and basic leucine zipper domain-containing protein 1 (ASZ1).